Consider the following 559-residue polypeptide: Thermosome subunit alpha (559 aa).

A compositionally biased stretch (basic and acidic residues) spans 536–552 (SGEKKGEKKEGGEEEKS). Residues 536-559 (SGEKKGEKKEGGEEEKSSTPSSLE) form a disordered region.

Belongs to the TCP-1 chaperonin family. In terms of assembly, forms a Heterooligomeric complex of two stacked nine-membered rings; one of alpha and the other of beta subunits.

Its function is as follows. Molecular chaperone; binds unfolded polypeptides in vitro, and has a weak ATPase activity. The sequence is that of Thermosome subunit alpha (thsA) from Sulfurisphaera tokodaii (strain DSM 16993 / JCM 10545 / NBRC 100140 / 7) (Sulfolobus tokodaii).